The following is a 298-amino-acid chain: uncharacterized protein (298 aa).

Transmembrane regions (helical) follow at residues 5 to 25 (ILFGVSMILLANLCFGIMSAF), 36 to 56 (MENVFYRSITMTLLLLLIYPF), 76 to 96 (VVVGGLAMLAFFYNIEKISLA), 97 to 117 (TATAFSQCAPIYTVLLSPLLL), 124 to 144 (SALISACIGLVGVVLISDPSV), 147 to 167 (VGLVEIIMGILSGIFVSLAYI), 181 to 201 (VILAFAFGMSLLGLAGMFIDI), 216 to 236 (ILWISLIGISGTLGQYFLTYA), 244 to 264 (IIAPIEYTRIVWGLLFGLYLG), and 272 to 292 (SSLGVALILCSGLLIALPALL). Residues 17–141 (LCFGIMSAFV…GLVGVVLISD (125 aa)) form the EamA 1 domain. Residues 183–288 (LAFAFGMSLL…ILCSGLLIAL (106 aa)) enclose the EamA 2 domain.

It belongs to the EamA transporter family.

Its subcellular location is the cell membrane. This is an uncharacterized protein from Helicobacter pylori (strain J99 / ATCC 700824) (Campylobacter pylori J99).